A 618-amino-acid chain; its full sequence is MDATYTMAQTPVQGQPSFAYYPTESQSRQQHFTSHPFEMQYYGQVSSYPQQQAQQQHSMPEQQPVYAAQPMLNMHQMATTNAFRGALSMTPIASPQPTHLKPTIIVQQDSPALMPLDTRFVSNDFYGFPSTPPLSTSGSTISSPPSSNGSLHTPINDCFFSFEKVEGVKEGCESDVHCELLANTDWSRSDSPPLTPVFIQPQSLTASQSSDLLSAQIPCPSLSPSPSPDSATFISHPQSILSAEPSGSDFCDPRQLTVESSVGAPAELPPLPTLSCNEEEPKVVLGSATVTLPVHEGLSPSFSSSSEDPLGSLPTFDSFSDLDSEDEFANKLVDFHPIGNTYFQGDKRQRLGTYLLDEDEFLSERSLEDLDDQEAFAQSGLPSVESTDFLAVEGDATQSTEEMSSKKRVTSRRSLKKASTSESSSDSLAKKTQASATSRSGHSDTTSTVQQSTASSRQNSTANTSNSESPAAPVSVNRRGRKQSLTDDPSKTFVCSLCSRRFRRQEHLKRHYRSLHTQDKPFECHECGKKFSRSDNLAQHARTHGGGSIVMGVIDTNSSNTQPAFDEPEPRALGLALYEAANAATSKSTTSESSDGTISDTSSVGGRPAKKRRRDDHV.

The interval G394–D488 is disordered. Over residues K406–K416 the composition is skewed to basic residues. Low complexity-rich tracts occupy residues K417 to T432 and S443 to Q458. The segment covering N459–S469 has biased composition (polar residues). 2 consecutive C2H2-type zinc fingers follow at residues F493–H516 and F522–H544. Residues N582–T597 are compositionally biased toward low complexity. The disordered stretch occupies residues N582–V618. Residues P608–V618 show a composition bias toward basic residues.

The protein localises to the nucleus. Its subcellular location is the cytoplasm. Its function is as follows. Transcription factor that is involved in the response to heat shock, oxidative stress, and poor nutrient conditions. Controls expression of oxidative stress response genes such as ccp1, cat1, cat2, sod2; as well as of heat shock genes such as hsf1, hsp30 and hsp90. Negatively controls the expression of the fumiquinazoline (fmq) cluster via binding to the STRE motifs at the fmqA-D promoters. Plays a role in virulence. The protein is C2H2 finger domain transcription factor sebA of Aspergillus fumigatus (strain ATCC MYA-4609 / CBS 101355 / FGSC A1100 / Af293) (Neosartorya fumigata).